The following is a 234-amino-acid chain: 2,3-bisphosphoglycerate-dependent phosphoglycerate mutase 1 (234 aa).

Substrate-binding positions include 14–21, 27–28, Arg-66, and 93–96; these read RHGQSIWN, TG, and ERHY. The active-site Tele-phosphohistidine intermediate is the His-15. Glu-93 serves as the catalytic Proton donor/acceptor.

This sequence belongs to the phosphoglycerate mutase family. BPG-dependent PGAM subfamily. Homodimer.

It carries out the reaction (2R)-2-phosphoglycerate = (2R)-3-phosphoglycerate. The protein operates within carbohydrate degradation; glycolysis; pyruvate from D-glyceraldehyde 3-phosphate: step 3/5. Functionally, catalyzes the interconversion of 2-phosphoglycerate and 3-phosphoglycerate. The polypeptide is 2,3-bisphosphoglycerate-dependent phosphoglycerate mutase 1 (Nitrosomonas europaea (strain ATCC 19718 / CIP 103999 / KCTC 2705 / NBRC 14298)).